We begin with the raw amino-acid sequence, 377 residues long: Protein RecA (377 aa).

Residue 76–83 coordinates ATP; the sequence is GPESSGKT.

This sequence belongs to the RecA family.

It is found in the cytoplasm. In terms of biological role, can catalyze the hydrolysis of ATP in the presence of single-stranded DNA, the ATP-dependent uptake of single-stranded DNA by duplex DNA, and the ATP-dependent hybridization of homologous single-stranded DNAs. It interacts with LexA causing its activation and leading to its autocatalytic cleavage. The polypeptide is Protein RecA (Corynebacterium aurimucosum (strain ATCC 700975 / DSM 44827 / CIP 107346 / CN-1) (Corynebacterium nigricans)).